The chain runs to 275 residues: tRNA pseudouridine synthase B (275 aa).

D38 acts as the Nucleophile in catalysis.

Belongs to the pseudouridine synthase TruB family. Type 1 subfamily.

The catalysed reaction is uridine(55) in tRNA = pseudouridine(55) in tRNA. Responsible for synthesis of pseudouridine from uracil-55 in the psi GC loop of transfer RNAs. The sequence is that of tRNA pseudouridine synthase B from Nitratiruptor sp. (strain SB155-2).